A 236-amino-acid polypeptide reads, in one-letter code: Peroxisomal membrane protein 11D (236 aa).

At glycine 2 the chain carries N-acetylglycine. Over 2-92 the chain is Cytoplasmic; the sequence is GTTLDVSRAE…LPLVLLGKSK (91 aa). A helical membrane pass occupies residues 93–109; sequence NALLSTFLFLDQIVWLG. Topologically, residues 110–207 are lumenal; that stretch reads RSGIYKNKER…LLQLAPTKIT (98 aa). The chain crosses the membrane as a helical span at residues 208–227; that stretch reads PRVTGAFGFITSIISCYQLL. Residues 228-236 lie on the Cytoplasmic side of the membrane; it reads PTRPKIKTP.

It belongs to the peroxin-11 family. Homooligomer. Interacts with ARC5 and FIS1B on peroxisomes. Expressed in developing siliques.

It localises to the peroxisome membrane. Functionally, involved in peroxisomal proliferation. Promotes peroxisomal duplication, aggregation or elongation without fission. This Arabidopsis thaliana (Mouse-ear cress) protein is Peroxisomal membrane protein 11D (PEX11D).